A 92-amino-acid chain; its full sequence is MATTYEEFSAKLDRLDQEFNRKMQEQNAKFFADKPDESTLSPEMREHYEKFERMIKEHTEKFNKKMHEHSEHFKQKFAELLEQQKAAQYPSK.

At R45 the chain carries Omega-N-methylarginine.

It belongs to the KMP-11 family. Monomer. A minor in vivo processed fragment (IVP) also exists, probably as a result of proteolysis. In terms of processing, probably O-glycosylated. Contains equimolar amounts of galactosamine, galactose, glucose and mannose. Post-translationally, the N-terminus is blocked.

The protein resides in the cytoplasm. Its subcellular location is the cytoskeleton. May be involved in the regulation of the cytoskeleton through interaction with the subpellicular microtubules. May be involved in parasite mobility and attachment to the surface of the host cell. Strongly stimulates T-cell proliferation and is thought to play a role in the immunology of leishmaniasis. The sequence is that of Kinetoplastid membrane protein 11 (KMP-11) from Leishmania donovani.